Consider the following 336-residue polypeptide: UPF0324 membrane protein PM1461 (336 aa).

A run of 10 helical transmembrane segments spans residues 5 to 23 (TLFL…VNLL), 30 to 52 (LNAN…NTFY), 62 to 84 (GVIF…RLTL), 91 to 113 (GINA…LWLG), 123 to 140 (IVYL…AAIM), 153 to 175 (VSIA…PLMY), 221 to 238 (MIRV…SWLL), 250 to 271 (ISIP…FSLI), 275 to 297 (IVAW…LGLT), and 310 to 332 (PLIL…NVGI).

Belongs to the UPF0324 family.

The protein resides in the cell membrane. The sequence is that of UPF0324 membrane protein PM1461 from Pasteurella multocida (strain Pm70).